The chain runs to 205 residues: Methylthioribulose-1-phosphate dehydratase (205 aa).

Residues His96 and His98 each coordinate Zn(2+).

Belongs to the aldolase class II family. MtnB subfamily. The cofactor is Zn(2+).

The enzyme catalyses 5-(methylsulfanyl)-D-ribulose 1-phosphate = 5-methylsulfanyl-2,3-dioxopentyl phosphate + H2O. The protein operates within amino-acid biosynthesis; L-methionine biosynthesis via salvage pathway; L-methionine from S-methyl-5-thio-alpha-D-ribose 1-phosphate: step 2/6. Catalyzes the dehydration of methylthioribulose-1-phosphate (MTRu-1-P) into 2,3-diketo-5-methylthiopentyl-1-phosphate (DK-MTP-1-P). This chain is Methylthioribulose-1-phosphate dehydratase, found in Pseudomonas paraeruginosa (strain DSM 24068 / PA7) (Pseudomonas aeruginosa (strain PA7)).